Reading from the N-terminus, the 95-residue chain is Aspartyl/glutamyl-tRNA(Asn/Gln) amidotransferase subunit C (95 aa).

The protein belongs to the GatC family. In terms of assembly, heterotrimer of A, B and C subunits.

It carries out the reaction L-glutamyl-tRNA(Gln) + L-glutamine + ATP + H2O = L-glutaminyl-tRNA(Gln) + L-glutamate + ADP + phosphate + H(+). The enzyme catalyses L-aspartyl-tRNA(Asn) + L-glutamine + ATP + H2O = L-asparaginyl-tRNA(Asn) + L-glutamate + ADP + phosphate + 2 H(+). Its function is as follows. Allows the formation of correctly charged Asn-tRNA(Asn) or Gln-tRNA(Gln) through the transamidation of misacylated Asp-tRNA(Asn) or Glu-tRNA(Gln) in organisms which lack either or both of asparaginyl-tRNA or glutaminyl-tRNA synthetases. The reaction takes place in the presence of glutamine and ATP through an activated phospho-Asp-tRNA(Asn) or phospho-Glu-tRNA(Gln). In Prochlorococcus marinus (strain NATL1A), this protein is Aspartyl/glutamyl-tRNA(Asn/Gln) amidotransferase subunit C.